A 1503-amino-acid chain; its full sequence is ATP-binding cassette sub-family C member 6 (1503 aa).

Topologically, residues 1 to 31 are extracellular; that stretch reads MAAPAEPCAGQGVWNQTEPEPAATSLLSLCF. Residue N15 is glycosylated (N-linked (GlcNAc...) asparagine). The helical transmembrane segment at 32–52 threads the bilayer; that stretch reads LRTAGVWVPPMYLWVLGPIYL. Residues 53 to 72 lie on the Cytoplasmic side of the membrane; that stretch reads LFIHHHGRGYLRMSPLFKAK. Residues 73-93 form a helical membrane-spanning segment; sequence MVLGFALIVLCTSSVAVALWK. The Extracellular segment spans residues 94–98; it reads IQQGT. Residues 99 to 119 form a helical membrane-spanning segment; it reads PEAPEFLIHPTVWLTTMSFAV. The Cytoplasmic segment spans residues 120 to 131; that stretch reads FLIHTERKKGVQ. A helical transmembrane segment spans residues 132–149; sequence SSGVLFGYWLLCFVLPAT. Topologically, residues 150–167 are extracellular; it reads NAAQQASGAGFQSDPVRH. Residues 168-188 traverse the membrane as a helical segment; sequence LSTYLCLSLVVAQFVLSCLAD. Topologically, residues 189 to 302 are cytoplasmic; the sequence is QPPFFPEDPQ…GSQWRPLLKA (114 aa). A helical transmembrane segment spans residues 303-323; sequence IWQVFHSTFLLGTLSLIISDV. In terms of domain architecture, ABC transmembrane type-1 1 spans 311-593; it reads FLLGTLSLII…LPFSIHSLVQ (283 aa). At 324-349 the chain is on the extracellular side; it reads FRFTVPKLLSLFLEFIGDPKPPAWKG. Residues 350–370 traverse the membrane as a helical segment; the sequence is YLLAVLMFLSACLQTLFEQQN. Residues 371–426 lie on the Cytoplasmic side of the membrane; that stretch reads MYRLKVLQMRLRSAITGLVYRKVLALSSGSRKASAVGDVVNLVSVDVQRLTESVLY. The chain crosses the membrane as a helical span at residues 427–447; it reads LNGLWLPLVWIVVCFVYLWQL. The Extracellular portion of the chain corresponds to 448-450; that stretch reads LGP. A helical membrane pass occupies residues 451 to 471; it reads SALTAIAVFLSLLPLNFFISK. The Cytoplasmic portion of the chain corresponds to 472–533; the sequence is KRNHHQEEQM…ALRTSGLLFS (62 aa). The chain crosses the membrane as a helical span at residues 534 to 554; sequence VSLVSFQVSTFLVALVVFAVH. Topologically, residues 555 to 575 are extracellular; that stretch reads TLVAENAMNAEKAFVTLTVLN. A helical transmembrane segment spans residues 576 to 596; it reads ILNKAQAFLPFSIHSLVQARV. The Cytoplasmic portion of the chain corresponds to 597-939; it reads SFDRLVTFLC…VKATVHLAYL (343 aa). The region spanning 629–853 is the ABC transporter 1 domain; sequence ITIHSATFAW…KGALMCLLDQ (225 aa). Position 663–670 (663–670) interacts with ATP; sequence GPVGAGKS. Residues 854–919 are disordered; the sequence is ARQPGDRGEG…LDDPDRAGWP (66 aa). The segment covering 881-901 has biased composition (basic and acidic residues); it reads RRPELRRERSIKSVPEKDRTT. The chain crosses the membrane as a helical span at residues 940-960; sequence RAVGTPLCLYALFLFLCQQVA. The ABC transmembrane type-1 2 domain occupies 947 to 1228; that stretch reads CLYALFLFLC…VVRNWTDLEN (282 aa). Topologically, residues 961 to 997 are extracellular; it reads SFCRGYWLSLWADDPAVGGQQTQAALRGGIFGLLGCL. The helical transmembrane segment at 998–1018 threads the bilayer; the sequence is QAIGLFASMAAVLLGGARASR. The Cytoplasmic portion of the chain corresponds to 1019 to 1061; that stretch reads LLFQRLLWDVVRSPISFFERTPIGHLLNRFSKETDTVDVDIPD. Residues 1062–1082 traverse the membrane as a helical segment; sequence KLRSLLMYAFGLLEVSLVVAV. Residue A1083 is a topological domain, extracellular. A helical membrane pass occupies residues 1084-1104; sequence TPLATVAILPLFLLYAGFQSL. At 1105–1175 the chain is on the cytoplasmic side; that stretch reads YVVSSCQLRR…VADRWLAANV (71 aa). A helical transmembrane segment spans residues 1176 to 1196; that stretch reads ELLGNGLVFAAATCAVLSKAH. Topologically, residues 1197–1198 are extracellular; it reads LS. The helical transmembrane segment at 1199 to 1219 threads the bilayer; it reads AGLVGFSVSAALQVTQTLQWV. Residues 1220-1503 lie on the Cytoplasmic side of the membrane; it reads VRNWTDLENS…YRLAQESGLV (284 aa). Residues 1265-1499 form the ABC transporter 2 domain; the sequence is IEFRDFGLRY…KGLFYRLAQE (235 aa). S1286 carries the post-translational modification Phosphoserine. An ATP-binding site is contributed by 1299 to 1306; the sequence is GRTGAGKS.

The protein belongs to the ABC transporter superfamily. ABCC family. Conjugate transporter (TC 3.A.1.208) subfamily. Mg(2+) is required as a cofactor. In terms of processing, glycosylated. In terms of tissue distribution, expressed in kidney and liver. Very low expression in other tissues. In testis, localized to peritubular myoid cells, Leydig cells, along the basal membrane of Sertoli cells and moderately in the adluminal compartment of the seminiferous tubules.

It localises to the basal cell membrane. Its subcellular location is the basolateral cell membrane. It is found in the endoplasmic reticulum membrane. The catalysed reaction is an S-substituted glutathione(in) + ATP + H2O = an S-substituted glutathione(out) + ADP + phosphate + H(+). The enzyme catalyses leukotriene C4(in) + ATP + H2O = leukotriene C4(out) + ADP + phosphate + H(+). Its activity is regulated as follows. LTC4 transport is completely inhibited by 1 mM orthovanadate. Functionally, ATP-dependent transporter of the ATP-binding cassette (ABC) family that actively extrudes physiological compounds, and xenobiotics from cells. Mediates ATP-dependent transport of glutathione conjugates such as leukotriene-c4 (LTC4) and N-ethylmaleimide S-glutathione (NEM-GS) (in vitro), and an anionic cyclopentapeptide endothelin antagonist, BQ-123. May contribute to regulate the transport of organic compounds in testes across the blood-testis-barrier. Does not appear to actively transport drugs outside the cell. Confers low levels of cellular resistance to etoposide, teniposide, anthracyclines and cisplatin. Its function is as follows. Mediates the release of nucleoside triphosphates, predominantly ATP, into the circulation, where it is rapidly converted into AMP and the mineralization inhibitor inorganic pyrophosphate (PPi) by the ecto-enzyme ectonucleotide pyrophosphatase phosphodiesterase 1 (ENPP1), therefore playing a role in PPi homeostasis. In terms of biological role, inhibits TNF-alpha-mediated apoptosis through blocking one or more caspases. The chain is ATP-binding cassette sub-family C member 6 (ABCC6) from Homo sapiens (Human).